Reading from the N-terminus, the 206-residue chain is Ras-related protein RABG3a (206 aa).

A GTP-binding site is contributed by 15-22 (GDSGVGKT). The Effector region signature appears at 37-45 (YKATIGADF). Residues 63–67 (DTAGQ), 125–128 (NKID), and 158–159 (SA) each bind GTP. Residues C204 and C206 are each lipidated (S-geranylgeranyl cysteine). C206 is subject to Cysteine methyl ester.

Belongs to the small GTPase superfamily. Rab family.

The protein resides in the cell membrane. In terms of biological role, intracellular vesicle trafficking and protein transport. This Arabidopsis thaliana (Mouse-ear cress) protein is Ras-related protein RABG3a (RABG3A).